Reading from the N-terminus, the 450-residue chain is Zinc finger protein 277 (450 aa).

Position 2 is an N-acetylalanine (alanine 2). 2 C2H2-type zinc fingers span residues 224-248 (LQCL…KKQH) and 355-381 (HQCR…ETKH).

The protein belongs to the ZNF277 family. As to quaternary structure, interacts (via zinc-finger domains) with RPS2/40S ribosomal protein S2, perhaps as nascent RPS2 is synthesized during translation; the interaction is direct; the interaction is extra-ribosomal. Interaction with RPS2 competes with the binding of RPS2 to protein arginine methyltransferase PRMT3. Interacts with Polycomb group (PcG) complex protein BMI1. May be part of a complex including at least ZNF277, BMI1 and RNF2/RING2.

It is found in the nucleus. Its function is as follows. Probable transcription factor. Involved in modulation of cellular senescence; represses transcription of the tumor suppressor gene INK4A/ARF, perhaps acting via the Polycomb group (PcG) complex PRC1. The chain is Zinc finger protein 277 (ZNF277) from Homo sapiens (Human).